We begin with the raw amino-acid sequence, 358 residues long: Protein-glutamate methylesterase/protein-glutamine glutaminase 1 (358 aa).

A Response regulatory domain is found at 8-125; that stretch reads RVLIVDDSAV…ARGLEGYAEE (118 aa). Asp-59 is modified (4-aspartylphosphate). The CheB-type methylesterase domain maps to 157–352; the sequence is PVPGSALRFR…LERVAERLIA (196 aa). Residues Ser-177, His-203, and Asp-299 contribute to the active site.

It belongs to the CheB family. In terms of processing, phosphorylated by CheA. Phosphorylation of the N-terminal regulatory domain activates the methylesterase activity.

It is found in the cytoplasm. The catalysed reaction is [protein]-L-glutamate 5-O-methyl ester + H2O = L-glutamyl-[protein] + methanol + H(+). It catalyses the reaction L-glutaminyl-[protein] + H2O = L-glutamyl-[protein] + NH4(+). Involved in chemotaxis. Part of a chemotaxis signal transduction system that modulates chemotaxis in response to various stimuli. Catalyzes the demethylation of specific methylglutamate residues introduced into the chemoreceptors (methyl-accepting chemotaxis proteins or MCP) by CheR. Also mediates the irreversible deamidation of specific glutamine residues to glutamic acid. The protein is Protein-glutamate methylesterase/protein-glutamine glutaminase 1 of Xanthomonas campestris pv. campestris (strain ATCC 33913 / DSM 3586 / NCPPB 528 / LMG 568 / P 25).